The following is a 593-amino-acid chain: Mitosis inducer protein kinase cdr1 (593 aa).

Residues 12 to 258 (WRLGKTLGTG…IPEVFSHPFL (247 aa)) enclose the Protein kinase domain. ATP is bound by residues 18–26 (LGTGSTSCV) and Lys-41. The active-site Proton acceptor is Asp-128. Ser-550 is modified (phosphoserine).

It belongs to the protein kinase superfamily. CAMK Ser/Thr protein kinase family. NIM1 subfamily. In terms of assembly, interacts with msp1.

It carries out the reaction L-seryl-[protein] + ATP = O-phospho-L-seryl-[protein] + ADP + H(+). It catalyses the reaction L-threonyl-[protein] + ATP = O-phospho-L-threonyl-[protein] + ADP + H(+). Functionally, this protein, a dose-dependent mitotic inducer, appears to function as a negative regulator of mitosis inhibitor wee1 by phosphorylating and inactivating it. This Schizosaccharomyces pombe (strain 972 / ATCC 24843) (Fission yeast) protein is Mitosis inducer protein kinase cdr1 (cdr1).